A 267-amino-acid polypeptide reads, in one-letter code: Ribonuclease HII (267 aa).

One can recognise an RNase H type-2 domain in the interval 57 to 245 (WPVAGCDEVG…VVAARERHRA (189 aa)). A divalent metal cation is bound by residues Asp-63, Glu-64, and Asp-154.

It belongs to the RNase HII family. The cofactor is Mn(2+). It depends on Mg(2+) as a cofactor.

The protein resides in the cytoplasm. The enzyme catalyses Endonucleolytic cleavage to 5'-phosphomonoester.. In terms of biological role, endonuclease that specifically degrades the RNA of RNA-DNA hybrids. This is Ribonuclease HII from Nitrobacter hamburgensis (strain DSM 10229 / NCIMB 13809 / X14).